Consider the following 74-residue polypeptide: MSKICQITGKKPITGNNRSHAMNATKRRFFPNLHFHKFWNPKTKRFIILRVSAKGMRNIDKLGLNSLKIKKLHK.

Belongs to the bacterial ribosomal protein bL28 family.

The chain is Large ribosomal subunit protein bL28 from Buchnera aphidicola subsp. Baizongia pistaciae (strain Bp).